The chain runs to 813 residues: Sorting nexin-29 (813 aa).

Positions 36–180 (SDSDSRVTCL…ILFAINIDNK (145 aa)) constitute an RUN domain. Residues Ser268, Ser291, Ser292, Ser330, and Ser344 each carry the phosphoserine modification. The disordered stretch occupies residues 269–299 (FDDEEDEQNSGDVFKKTPGAGESSEDNSDRS). Positions 346–357 (DDEDVDENEDDV) are enriched in acidic residues. The disordered stretch occupies residues 346 to 378 (DDEDVDENEDDVYGNSSGRKHRGHSESPEKPLE). Phosphoserine is present on residues Ser445 and Ser450. A coiled-coil region spans residues 466-545 (TISELRQATV…VLKVQLKKYV (80 aa)). The residue at position 639 (Ser639) is a Phosphoserine. Thr641 carries the phosphothreonine modification. Phosphoserine occurs at positions 642 and 646. Positions 656–779 (ALINVWIPSV…PFFVDITPPG (124 aa)) constitute a PX domain. Residues 778-813 (PGEPVNSRPKAASRFPKLSRGQPRETRNVEPQSGDL) form a disordered region.

The protein belongs to the sorting nexin family.

The polypeptide is Sorting nexin-29 (SNX29) (Homo sapiens (Human)).